We begin with the raw amino-acid sequence, 572 residues long: Putative lysozyme-like protein (572 aa).

Positions 1–17 are cleaved as a signal peptide; it reads MRLLLVLLALIFSVVSA. Positions 145-165 are enriched in low complexity; it reads MSSSGSSSSSGSSGSSSSSSG. Disordered regions lie at residues 145 to 199, 231 to 297, 326 to 388, and 433 to 469; these read MSSS…HGGG, SSSS…GGGV, ANSV…GERK, and AGSS…GGSG. A compositionally biased stretch (gly residues) spans 166-185; that stretch reads SSGGGSSGGGSGGGGGGSGL. Over residues 231–240 the composition is skewed to low complexity; it reads SSSSADAGSS. The segment covering 258–282 has biased composition (gly residues); sequence STGGTGGSSGSSGGGSGGGGGGSGL. Low complexity predominate over residues 326-358; that stretch reads ANSVSSLAGSMSSSGSSSSSGSSGSSSSSSSSG. Gly residues predominate over residues 359 to 382; it reads SSGGSSGGGSSGGGSGGGGGGSGL. Residues 433–452 are compositionally biased toward low complexity; sequence AGSSSSSGSSGSSSSSSSSG. A compositionally biased stretch (gly residues) spans 453–469; sequence SSGGSSGGSSGGGGGSG.

The protein belongs to the dictyostelium lysozyme family.

This chain is Putative lysozyme-like protein (alyL), found in Dictyostelium discoideum (Social amoeba).